A 1435-amino-acid chain; its full sequence is MLKSNDCLFSLENLFFEKPDEVENHPDNEKSLDWFLPPAPLISEIPDTQELEEELESHKLLGQEKRPKMLTSNLKITNEDTNYISLTQKFQFAFPSDKYEQDDLNLEGVGNNDLSHIAGKLTYASQKYKNHIGTEIAPEKSVPDDTKLVNFAEDKGESTSVFRKRLFKISDNIHGSAYSNDNELDSHIGSVKIVQTEMNKGKSRNYSNSKQKFQYSANVFTANNAFSASEIGEGMFKAPSFSVAFQPHDIQEVTENGLGSLKAVTEIPAKFRSIFKEFPYFNYIQSKAFDDLLYTDRNFVICAPTGSGKTVVFELAITRLLMEVPLPWLNIKIVYMAPIKALCSQRFDDWKEKFGPIGLNCKELTGDTVMDDLFEIQHAHIIMTTPEKWDSMTRKWRDNSLVQLVRLFLIDEVHIVKDENRGPTLEVVVSRMKTVQSVSQTLKNTSTAIPMRFVAVSATIPNAEDIAEWLSDGERPAVCLKMDESHRPVKLQKVVLGFPCSSNQTEFKFDLTLNYKIASVIQMYSDQKPTLVFCATRKGVQQAASVLVKDAKFIMTVEQKQRLQKYAYSVRDSKLRDILKDGAAYHHAGMELSDRKVVEGAFTVGDLPVLFTTSTLAMGVNLPAHLVVIKSTMHYAGGLFEEYSETDILQMIGRAGRPQFDTTATAVIMTRLSTRDKYIQMLACRDTVESSLHRHLIEHLNAEIVLHTITDVNIAVEWIRSTLLYIRALKNPSHYGFASGLNKDGIEAKLQELCLKNLNDLSSLDLIKMDEGVNFKPTEAGRLMAWYYITFETVKKFYTISGKETLSDLVTLIAGCKEFLDIQLRINEKKTLNTLNKDPNRITIRFPMEGRIKTREMKVNCLIQAQLGCIPIQDFALTQDTAKIFRHGSRITRWLSDFVAAQEKKFAVLLNSLILAKCFRCKLWENSLHVSKQLEKIGITLSNAIVNAGLTSFKKIEETDARELELILNRHPPFGTQIKETVMYLPKYELKVEQITRYSDTTAEILVTVILRNFEQLQTKRTASDSHYVTLIIGDADNQVVYLHKITDSVLLKAGSWAKKIAVKRALKSEDLSINLISSEFVGLDIQQKLTVFYLEPKRFGNQITMQRKSETQISHSKHSDISTIAGPNKGTTASKKPGNRECNHLCKSKHTCGHDCCKIGVAQKSEIKESTISSYLSDLRNRNAVSSVPPVKRLKIQMNKSQSVDLKEFGFTPKPSLPSISRSEYLNISELPIMEQWDQPEIYGKVRQEPSEYQDKEVLNVNFELGNEVWDDFDDENLEVTSFSTDTEKTKISGFGNTLSSSTRGSKLPLQESKSKFQREMSNSFVSSHEMSDISLSNSAMPKFSASSMTKLPQQAGNAVIVHFQERKPQNLSPEIEKQCFTFSEKNPNSSNYKKVDFFIRNSECKKEVDFSMYHPDDEADEMKSLLGIFDGIF.

Positions 290 to 478 (DDLLYTDRNF…WLSDGERPAV (189 aa)) constitute a Helicase ATP-binding domain. An ATP-binding site is contributed by 303–310 (APTGSGKT). A DEAH box motif is present at residues 411–414 (DEVH). Residues 519–720 (SVIQMYSDQK…DVNIAVEWIR (202 aa)) enclose the Helicase C-terminal domain. One can recognise an SEC63 domain in the interval 777 to 1092 (PTEAGRLMAW…GLDIQQKLTV (316 aa)). Residues 1109 to 1139 (KSETQISHSKHSDISTIAGPNKGTTASKKPG) form a disordered region. A C4-type zinc finger spans residues 1143–1158 (CNHLCKSKHTCGHDCC). Positions 1295-1315 (GFGNTLSSSTRGSKLPLQESK) are disordered. Residues 1296 to 1306 (FGNTLSSSTRG) show a composition bias toward polar residues.

The protein belongs to the helicase family. SKI2 subfamily. Requires Zn(2+) as cofactor. In terms of tissue distribution, preferentially expressed in testis and ovary.

The enzyme catalyses Couples ATP hydrolysis with the unwinding of duplex DNA by translocating in the 3'-5' direction.. It catalyses the reaction ATP + H2O = ADP + phosphate + H(+). Functionally, required for crossover formation and complete synapsis of homologous chromosomes during meiosis. The chain is Probable ATP-dependent DNA helicase HFM1 (HFM1) from Homo sapiens (Human).